Reading from the N-terminus, the 230-residue chain is Voltage-gated hydrogen channel 1 (230 aa).

The Cytoplasmic portion of the chain corresponds to 1 to 58 (MAGCLRHFTSVGDDTKKREWKQEDVEVAYEEPLKNTPHPFIASYSFRGALKWLLSSHK). Residues 59–79 (FQIVIICLVILDALFVLVEVL) form a helical membrane-spanning segment. The Extracellular segment spans residues 80–96 (LDLELLAEKVDHIIPEI). A helical membrane pass occupies residues 97–119 (FHYLSISVLTFFILEIAGKLYAF). At 120–127 (RLEFFHHK) the chain is on the cytoplasmic side. Residues 128-148 (FEVFDAAIVVISFIIDIVYIS) traverse the membrane as a helical segment. At 149–155 (REDIFNA) the chain is on the extracellular side. A helical transmembrane segment spans residues 156-176 (VGLLILLRLWRVARIVNGVIV). Residues 177 to 230 (SVKTRAEEKMHKLKEQKGSLLEKVAQLEQQCAQQEQEIGRLHKLLQEHNVFPAS) lie on the Cytoplasmic side of the membrane. A coiled-coil region spans residues 178–225 (VKTRAEEKMHKLKEQKGSLLEKVAQLEQQCAQQEQEIGRLHKLLQEHN).

It belongs to the hydrogen channel family. Homodimer.

It localises to the membrane. The protein localises to the cell membrane. In terms of biological role, mediates the voltage-dependent proton permeability of excitable membranes. Forms a proton-selective channel through which protons may pass in accordance with their electrochemical gradient. The sequence is that of Voltage-gated hydrogen channel 1 (hvcn1) from Xenopus laevis (African clawed frog).